The chain runs to 175 residues: Large ribosomal subunit protein uL10 (175 aa).

It belongs to the universal ribosomal protein uL10 family. In terms of assembly, part of the ribosomal stalk of the 50S ribosomal subunit. The N-terminus interacts with L11 and the large rRNA to form the base of the stalk. The C-terminus forms an elongated spine to which L12 dimers bind in a sequential fashion forming a multimeric L10(L12)X complex.

In terms of biological role, forms part of the ribosomal stalk, playing a central role in the interaction of the ribosome with GTP-bound translation factors. This Picosynechococcus sp. (strain ATCC 27264 / PCC 7002 / PR-6) (Agmenellum quadruplicatum) protein is Large ribosomal subunit protein uL10.